The following is a 402-amino-acid chain: Na(+)/H(+) antiporter NhaA 2 (402 aa).

11 consecutive transmembrane segments (helical) span residues 18-38 (AGGI…NTAL), 63-83 (ALLW…GLEV), 99-119 (SLPL…FYGI), 129-149 (GWAI…ALLG), 158-178 (ALLL…IAIF), 182-202 (GVEL…SAFG), 210-230 (IPYI…GVHA), 258-278 (ALHS…NAGV), 296-316 (IALG…WLAV), 329-349 (WLQV…SLFI), and 365-385 (IGVL…LVLG).

The protein belongs to the NhaA Na(+)/H(+) (TC 2.A.33) antiporter family.

The protein localises to the cell inner membrane. It carries out the reaction Na(+)(in) + 2 H(+)(out) = Na(+)(out) + 2 H(+)(in). Functionally, na(+)/H(+) antiporter that extrudes sodium in exchange for external protons. This Erythrobacter litoralis (strain HTCC2594) protein is Na(+)/H(+) antiporter NhaA 2.